Here is a 509-residue protein sequence, read N- to C-terminus: MEKWRIYSFQKEFERRCGLNSSLGPIETTGEDPNRKDTVKNIQSWEDCDNSSCSNVDHLFGVKDNENFISDDTFVVFDIENQIFEIDNDHSFLNEPFSSYSDRNSSYLTNVFTSEDPYYNRYMYDAQYSWNNHINGCIDSYLQSQICIDTTTVSGSDNDSYDIHGSVCDGESHNSSEGESSSRRTHTKGVDLTIRESSNENERESSNENERKSSNDLDRTKKYRDLWLQCENCYGLNYKKFLKSKMNICEQCGYHLKMSSSDRIELLIDPGTWDPMDEYMVSQDPIEFDSEGEQEQEQEQEQEEEETYKDRIDFYQTKTGLTEAVQTGIGQLNGIPVAIGVMDFHFLGGSMGSVVGEKITRLIEHATNNFLPLIIVCASGGARMQEGSLSLMQMAKISSALYEYQLNKRLFYVSILTSPTTGGVTASFGMLGDVIIVEPNAYVAFAGKRVIEQTLNQTVPEGSQEAEYLFEKGLFDLIVPRHLLKSVLSELFEFHALFPLNQNSNQVEC.

Positions 164 to 216 (HGSVCDGESHNSSEGESSSRRTHTKGVDLTIRESSNENERESSNENERKSSND) are disordered. 2 stretches are compositionally biased toward basic and acidic residues: residues 170–182 (GESH…ESSS) and 193–216 (TIRE…SSND). The CoA carboxyltransferase N-terminal domain occupies 226-509 (LWLQCENCYG…LNQNSNQVEC (284 aa)). Zn(2+) contacts are provided by Cys-230, Cys-233, Cys-249, and Cys-252. The C4-type zinc finger occupies 230-252 (CENCYGLNYKKFLKSKMNICEQC). The disordered stretch occupies residues 288–307 (FDSEGEQEQEQEQEQEEEET).

This sequence belongs to the AccD/PCCB family. In terms of assembly, acetyl-CoA carboxylase is a heterohexamer composed of biotin carboxyl carrier protein, biotin carboxylase and 2 subunits each of ACCase subunit alpha and ACCase plastid-coded subunit beta (accD). Requires Zn(2+) as cofactor.

The protein resides in the plastid. It localises to the chloroplast stroma. It carries out the reaction N(6)-carboxybiotinyl-L-lysyl-[protein] + acetyl-CoA = N(6)-biotinyl-L-lysyl-[protein] + malonyl-CoA. The protein operates within lipid metabolism; malonyl-CoA biosynthesis; malonyl-CoA from acetyl-CoA: step 1/1. Its function is as follows. Component of the acetyl coenzyme A carboxylase (ACC) complex. Biotin carboxylase (BC) catalyzes the carboxylation of biotin on its carrier protein (BCCP) and then the CO(2) group is transferred by the transcarboxylase to acetyl-CoA to form malonyl-CoA. This Ipomoea purpurea (Common morning glory) protein is Acetyl-coenzyme A carboxylase carboxyl transferase subunit beta, chloroplastic.